We begin with the raw amino-acid sequence, 201 residues long: Probable cobalt-precorrin-6B C(15)-methyltransferase (decarboxylating) (201 aa).

S-adenosyl-L-methionine-binding positions include T28, 52–56, D76, and A105; that span reads GTGTG.

Belongs to the methyltransferase superfamily. Archaeal-type CbiT family.

It carries out the reaction Co-precorrin-6B + S-adenosyl-L-methionine = Co-precorrin-7 + S-adenosyl-L-homocysteine + CO2. The protein operates within cofactor biosynthesis; adenosylcobalamin biosynthesis; cob(II)yrinate a,c-diamide from sirohydrochlorin (anaerobic route): step 8/10. Catalyzes the methylation of C-15 in cobalt-precorrin-6B followed by the decarboxylation of C-12 to form cobalt-precorrin-7. This is Probable cobalt-precorrin-6B C(15)-methyltransferase (decarboxylating) from Thermoplasma volcanium (strain ATCC 51530 / DSM 4299 / JCM 9571 / NBRC 15438 / GSS1).